The primary structure comprises 139 residues: Arsenate reductase (139 aa).

Residues Cys-10, Cys-82, and Cys-89 each act as nucleophile in the active site. 2 disulfide bridges follow: Cys-10–Cys-82 and Cys-82–Cys-89.

This sequence belongs to the low molecular weight phosphotyrosine protein phosphatase family. Thioredoxin-coupled ArsC subfamily.

Its subcellular location is the cytoplasm. It catalyses the reaction arsenate + [thioredoxin]-dithiol + H(+) = arsenite + [thioredoxin]-disulfide + H2O. In terms of biological role, catalyzes the reduction of arsenate [As(V)] to arsenite [As(III)]. The polypeptide is Arsenate reductase (Oceanobacillus iheyensis (strain DSM 14371 / CIP 107618 / JCM 11309 / KCTC 3954 / HTE831)).